A 287-amino-acid polypeptide reads, in one-letter code: Transcription cofactor vestigial-like protein 4 (287 aa).

Disordered regions lie at residues 44 to 68 (ASAL…SMEP) and 251 to 287 (AAKD…SVVS). Residues Ser58 and Ser271 each carry the phosphoserine modification. Over residues 275 to 287 (HMVSHSHSPSVVS) the composition is skewed to low complexity.

Belongs to the vestigial family. In terms of assembly, interacts with TEFs. Interacts with IRF2BP2.

It is found in the nucleus. In terms of biological role, may act as a specific coactivator for the mammalian TEFs. This Mus musculus (Mouse) protein is Transcription cofactor vestigial-like protein 4 (Vgll4).